Here is a 68-residue protein sequence, read N- to C-terminus: Large ribosomal subunit protein bL32 (68 aa).

The disordered stretch occupies residues 1–20 (MAVPQNRVTRSRRNMRRSHD).

This sequence belongs to the bacterial ribosomal protein bL32 family.

This is Large ribosomal subunit protein bL32 from Cereibacter sphaeroides (strain ATCC 17029 / ATH 2.4.9) (Rhodobacter sphaeroides).